The sequence spans 209 residues: Large ribosomal subunit protein uL3 (209 aa).

Gln150 carries the post-translational modification N5-methylglutamine.

It belongs to the universal ribosomal protein uL3 family. As to quaternary structure, part of the 50S ribosomal subunit. Forms a cluster with proteins L14 and L19. In terms of processing, methylated by PrmB.

One of the primary rRNA binding proteins, it binds directly near the 3'-end of the 23S rRNA, where it nucleates assembly of the 50S subunit. This Citrobacter koseri (strain ATCC BAA-895 / CDC 4225-83 / SGSC4696) protein is Large ribosomal subunit protein uL3.